Consider the following 215-residue polypeptide: Protein LURP-one-related 4 (215 aa).

The protein belongs to the LOR family.

Functionally, might be related to the phospholipid scramblase and tubby-like superfamily of membrane tethered transcription factors. This Arabidopsis thaliana (Mouse-ear cress) protein is Protein LURP-one-related 4.